The following is an 86-amino-acid chain: Small ribosomal subunit protein bS20 (86 aa).

Over residues 1-11 the composition is skewed to polar residues; that stretch reads MANIKSQIKRN. Residues 1 to 20 form a disordered region; the sequence is MANIKSQIKRNLTNEKRHQA.

This sequence belongs to the bacterial ribosomal protein bS20 family.

Its function is as follows. Binds directly to 16S ribosomal RNA. This Acholeplasma laidlawii (strain PG-8A) protein is Small ribosomal subunit protein bS20.